Consider the following 504-residue polypeptide: Glycerol kinase (504 aa).

Threonine 13 provides a ligand contact to ADP. ATP-binding residues include threonine 13, threonine 14, and serine 15. Sn-glycerol 3-phosphate is bound at residue threonine 13. Residue arginine 17 participates in ADP binding. Sn-glycerol 3-phosphate is bound by residues arginine 83, glutamate 84, and tyrosine 135. Arginine 83, glutamate 84, and tyrosine 135 together coordinate glycerol. Histidine 231 is subject to Phosphohistidine; by HPr. Aspartate 245 is a binding site for sn-glycerol 3-phosphate. Glycerol is bound by residues aspartate 245 and glutamine 246. ADP is bound by residues threonine 267 and glycine 310. ATP is bound by residues threonine 267, glycine 310, glutamine 314, and glycine 411. 2 residues coordinate ADP: glycine 411 and asparagine 415.

This sequence belongs to the FGGY kinase family. As to quaternary structure, homotetramer and homodimer (in equilibrium). Post-translationally, the phosphoenolpyruvate-dependent sugar phosphotransferase system (PTS), including enzyme I, and histidine-containing protein (HPr) are required for the phosphorylation, which leads to the activation of the enzyme.

It catalyses the reaction glycerol + ATP = sn-glycerol 3-phosphate + ADP + H(+). Its pathway is polyol metabolism; glycerol degradation via glycerol kinase pathway; sn-glycerol 3-phosphate from glycerol: step 1/1. With respect to regulation, activated by phosphorylation and inhibited by fructose 1,6-bisphosphate (FBP). Its function is as follows. Key enzyme in the regulation of glycerol uptake and metabolism. Catalyzes the phosphorylation of glycerol to yield sn-glycerol 3-phosphate. The chain is Glycerol kinase from Ligilactobacillus salivarius (strain UCC118) (Lactobacillus salivarius).